The sequence spans 263 residues: Glucosamine-6-phosphate deaminase (263 aa).

Asp72 (proton acceptor; for enolization step) is an active-site residue. Asp141 serves as the catalytic For ring-opening step. The active-site Proton acceptor; for ring-opening step is His143. Glu148 functions as the For ring-opening step in the catalytic mechanism.

It belongs to the glucosamine/galactosamine-6-phosphate isomerase family. NagB subfamily.

The enzyme catalyses alpha-D-glucosamine 6-phosphate + H2O = beta-D-fructose 6-phosphate + NH4(+). It functions in the pathway amino-sugar metabolism; N-acetylneuraminate degradation; D-fructose 6-phosphate from N-acetylneuraminate: step 5/5. Allosterically activated by N-acetylglucosamine 6-phosphate (GlcNAc6P). Its function is as follows. Catalyzes the reversible isomerization-deamination of glucosamine 6-phosphate (GlcN6P) to form fructose 6-phosphate (Fru6P) and ammonium ion. The polypeptide is Glucosamine-6-phosphate deaminase (Phocaeicola vulgatus (strain ATCC 8482 / DSM 1447 / JCM 5826 / CCUG 4940 / NBRC 14291 / NCTC 11154) (Bacteroides vulgatus)).